Consider the following 176-residue polypeptide: Inorganic pyrophosphatase (176 aa).

Positions 30, 44, and 56 each coordinate substrate. 3 residues coordinate Mg(2+): Asp66, Asp71, and Asp103. Position 142 (Tyr142) interacts with substrate.

It belongs to the PPase family. In terms of assembly, homohexamer. The cofactor is Mg(2+).

The protein localises to the cytoplasm. The catalysed reaction is diphosphate + H2O = 2 phosphate + H(+). In terms of biological role, catalyzes the hydrolysis of inorganic pyrophosphate (PPi) forming two phosphate ions. The polypeptide is Inorganic pyrophosphatase (Aeropyrum pernix (strain ATCC 700893 / DSM 11879 / JCM 9820 / NBRC 100138 / K1)).